The primary structure comprises 152 residues: ALK and LTK ligand 1 (152 aa).

The signal sequence occupies residues 1–23; the sequence is MRAEKRWHILLSMILLLITSSQC. 2 disulfide bridges follow: cysteine 113/cysteine 149 and cysteine 127/cysteine 136.

The protein belongs to the ALKAL family. Expressed at low level in the notochord and iridophore stripes, the eye and the swim bladder.

Its subcellular location is the secreted. The protein localises to the cell membrane. Its function is as follows. Cytokine that acts as a physiological ligand for receptor tyrosine kinases LTK and ALK. Required for iridophore development in the adult eye by acting as a receptor for LTK. This is ALK and LTK ligand 1 from Danio rerio (Zebrafish).